We begin with the raw amino-acid sequence, 901 residues long: HTH-type transcriptional regulator MalT (901 aa).

39-46 (SPAGYGKT) is an ATP binding site. Residues 829-894 (ELIRTSPLTQ…DAVQHAQQLL (66 aa)) form the HTH luxR-type domain. The segment at residues 853-872 (NEQIAGELAVAATTIKTHIR) is a DNA-binding region (H-T-H motif).

The protein belongs to the MalT family. In terms of assembly, monomer in solution. Oligomerizes to an active state in the presence of the positive effectors ATP and maltotriose.

With respect to regulation, activated by ATP and maltotriose, which are both required for DNA binding. In terms of biological role, positively regulates the transcription of the maltose regulon whose gene products are responsible for uptake and catabolism of malto-oligosaccharides. Specifically binds to the promoter region of its target genes, recognizing a short DNA motif called the MalT box. The sequence is that of HTH-type transcriptional regulator MalT from Enterobacter sp. (strain 638).